A 158-amino-acid chain; its full sequence is Transcription elongation factor GreB (158 aa).

Residues lysine 53–isoleucine 75 are a coiled coil.

Belongs to the GreA/GreB family. GreB subfamily.

Its function is as follows. Necessary for efficient RNA polymerase transcription elongation past template-encoded arresting sites. The arresting sites in DNA have the property of trapping a certain fraction of elongating RNA polymerases that pass through, resulting in locked ternary complexes. Cleavage of the nascent transcript by cleavage factors such as GreA or GreB allows the resumption of elongation from the new 3'terminus. GreB releases sequences of up to 9 nucleotides in length. This Haemophilus influenzae (strain ATCC 51907 / DSM 11121 / KW20 / Rd) protein is Transcription elongation factor GreB.